The chain runs to 547 residues: Chaperonin GroEL 2 (547 aa).

Residues 30-33, Lys51, 87-91, Gly415, 479-481, and Asp495 each bind ATP; these read TLGP, DGTTT, and NAA. The tract at residues 528-547 is disordered; that stretch reads KPATAGLPHGGPGGFGGPEF. Positions 535–547 are enriched in gly residues; that stretch reads PHGGPGGFGGPEF.

Belongs to the chaperonin (HSP60) family. Forms a cylinder of 14 subunits composed of two heptameric rings stacked back-to-back. Interacts with the co-chaperonin GroES.

It localises to the cytoplasm. It catalyses the reaction ATP + H2O + a folded polypeptide = ADP + phosphate + an unfolded polypeptide.. Its function is as follows. Together with its co-chaperonin GroES, plays an essential role in assisting protein folding. The GroEL-GroES system forms a nano-cage that allows encapsulation of the non-native substrate proteins and provides a physical environment optimized to promote and accelerate protein folding. This is Chaperonin GroEL 2 from Azoarcus sp. (strain BH72).